A 123-amino-acid polypeptide reads, in one-letter code: Ribosome-binding factor A (123 aa).

The protein belongs to the RbfA family. In terms of assembly, monomer. Binds 30S ribosomal subunits, but not 50S ribosomal subunits or 70S ribosomes.

The protein resides in the cytoplasm. Functionally, one of several proteins that assist in the late maturation steps of the functional core of the 30S ribosomal subunit. Associates with free 30S ribosomal subunits (but not with 30S subunits that are part of 70S ribosomes or polysomes). Required for efficient processing of 16S rRNA. May interact with the 5'-terminal helix region of 16S rRNA. The polypeptide is Ribosome-binding factor A (Geotalea daltonii (strain DSM 22248 / JCM 15807 / FRC-32) (Geobacter daltonii)).